The chain runs to 665 residues: Fermitin family homolog 3 (665 aa).

Phosphotyrosine is present on Y11. The FERM domain occupies 229–556 (WLDSSRCLMQ…SLPDFGISYV (328 aa)). The region spanning 354–453 (DHLRIFRPRK…WMAGCRLASK (100 aa)) is the PH domain. Y502 carries the post-translational modification Phosphotyrosine. Residue T589 is modified to Phosphothreonine.

It belongs to the kindlin family. Interacts with ITGB1, ITGB2 and ITGB3 (via cytoplasmic tails).

The protein resides in the cell projection. Its subcellular location is the podosome. Functionally, plays a central role in cell adhesion in hematopoietic cells. Acts by activating the integrin beta-1-3 (ITGB1, ITGB2 and ITGB3). Required for integrin-mediated platelet adhesion and leukocyte adhesion to endothelial cells. Required for activation of integrin beta-2 (ITGB2) in polymorphonuclear granulocytes (PMNs). This Bos taurus (Bovine) protein is Fermitin family homolog 3 (FERMT3).